Here is a 1314-residue protein sequence, read N- to C-terminus: E3 ubiquitin-protein ligase RNF123 (1314 aa).

A2 carries the N-acetylalanine modification. The B30.2/SPRY domain maps to 74–254; sequence VDSEDNESQG…VAFNFGSRPL (181 aa). Residues 460–483 are disordered; the sequence is HRSSRESRDGKEAREETTEERQRR. The segment covering 462–483 has biased composition (basic and acidic residues); sequence SSRESRDGKEAREETTEERQRR. The residue at position 675 (S675) is a Phosphoserine. R683 is modified (asymmetric dimethylarginine). The tract at residues 968–974 is interaction with NFKB1; the sequence is WILVRLW. Zn(2+) contacts are provided by C1254, C1257, C1269, H1271, C1274, C1277, C1288, and C1291. The RING-type zinc-finger motif lies at 1254–1292; that stretch reads CPICYAHPISAVFQPCGHKSCKACINQHLMNNKDCFFCK.

Component of the KPC complex composed of RNF123/KPC1 and UBAC1/KPC2. Interacts with UBAC1 and CDKN1B via its N-terminal domain. Interacts with RIGI (via N-terminus) and IFIH1 (via N-terminus). Post-translationally, ubiquitinated, leading to its degradation. Deubiquitinated by USP19, thereby stimulating CDKN1B ubiquitin-dependent degradation.

The protein resides in the cytoplasm. The catalysed reaction is S-ubiquitinyl-[E2 ubiquitin-conjugating enzyme]-L-cysteine + [acceptor protein]-L-lysine = [E2 ubiquitin-conjugating enzyme]-L-cysteine + N(6)-ubiquitinyl-[acceptor protein]-L-lysine.. Its pathway is protein modification; protein ubiquitination. Functionally, catalytic subunit of the KPC complex that acts as E3 ubiquitin-protein ligase. Promotes the ubiquitination and proteasome-mediated degradation of CDKN1B which is the cyclin-dependent kinase inhibitor at the G0-G1 transition of the cell cycle. Also acts as a key regulator of the NF-kappa-B signaling by promoting maturation of the NFKB1 component of NF-kappa-B: acts by catalyzing ubiquitination of the NFKB1 p105 precursor, leading to limited proteasomal degradation of NFKB1 p105 and generation of the active NFKB1 p50 subunit. Functions also as an inhibitor of innate antiviral signaling mediated by RIGI and IFIH1 independently of its E3 ligase activity. Interacts with the N-terminal CARD domains of RIGI and IFIH1 and competes with the downstream adapter MAVS. This chain is E3 ubiquitin-protein ligase RNF123 (Rnf123), found in Mus musculus (Mouse).